A 346-amino-acid chain; its full sequence is MHRFLFALDPEAAHGLALGLLAFWSERGPLLEVPARLLRVEDPRLRVEAFGVSFPNPLGLAAGMDKDARALGAWWALGFGFAEVGTLTPRPQVGNPKPRLFRLVEDRALINRMGFNNRGAEEAARCLKRFRQRGLPLPLGVNLGKNRDTPLERAAEDYLKALRFLEPFGDYFVLNVSSPNTPGLRALQEGPFLDELLARLRPATPKPLLLKVAPDLSPKALDEVLALTKKHRLQGLVAVNTTLAREGLKSPLAREAGGLSGRPLKRRALEVLRHLAEGAEGLALVSVGGVETPLDLWERLKAGASLVQVYTGFVYGGPLFPRRLLLGLLRLMEAEGVSSLGELRRA.

FMN contacts are provided by residues 62–66 and Thr86; that span reads AGMDK. Residue Lys66 coordinates substrate. Residue 111-115 participates in substrate binding; that stretch reads NRMGF. FMN contacts are provided by Asn142 and Asn175. Asn175 provides a ligand contact to substrate. Ser178 (nucleophile) is an active-site residue. Substrate is bound at residue Asn180. FMN contacts are provided by Lys211 and Val239. Substrate is bound at residue 240–241; that stretch reads NT. FMN-binding positions include Gly261, Gly289, and 310–311; that span reads YT.

This sequence belongs to the dihydroorotate dehydrogenase family. Type 2 subfamily. Monomer. FMN is required as a cofactor.

The protein resides in the cell membrane. It catalyses the reaction (S)-dihydroorotate + a quinone = orotate + a quinol. Its pathway is pyrimidine metabolism; UMP biosynthesis via de novo pathway; orotate from (S)-dihydroorotate (quinone route): step 1/1. Catalyzes the conversion of dihydroorotate to orotate with quinone as electron acceptor. The polypeptide is Dihydroorotate dehydrogenase (quinone) (Thermus thermophilus (strain ATCC BAA-163 / DSM 7039 / HB27)).